The following is a 64-amino-acid chain: SPbeta prophage-derived uncharacterized protein YopV (64 aa).

This Bacillus subtilis (strain 168) protein is SPbeta prophage-derived uncharacterized protein YopV (yopV).